Consider the following 390-residue polypeptide: Probable protein phosphatase 2C 30 (390 aa).

A compositionally biased stretch (polar residues) spans 1 to 10; that stretch reads MQLSKNPIKQ. Disordered stretches follow at residues 1 to 20 and 40 to 85; these read MQLS…NYTD and PPLV…DSET. The span at 44–61 shows a compositional bias: low complexity; that stretch reads FSPTSVKTPLSSPRSSPP. A PPM-type phosphatase domain is found at 128–385; it reads YYSVYCKRGR…DDISLIIIQL (258 aa). Aspartate 166, glycine 167, aspartate 331, and aspartate 376 together coordinate Mn(2+).

This sequence belongs to the PP2C family. The cofactor is Mg(2+). It depends on Mn(2+) as a cofactor.

It catalyses the reaction O-phospho-L-seryl-[protein] + H2O = L-seryl-[protein] + phosphate. The catalysed reaction is O-phospho-L-threonyl-[protein] + H2O = L-threonyl-[protein] + phosphate. The protein is Probable protein phosphatase 2C 30 (PP2C5) of Arabidopsis thaliana (Mouse-ear cress).